Reading from the N-terminus, the 477-residue chain is Bifunctional protein HldE (477 aa).

A ribokinase region spans residues 1–319; it reads MKITLPPFDQ…RALQEQEQSG (319 aa). 195–198 is an ATP binding site; that stretch reads NLAE. Aspartate 264 is a catalytic residue. A cytidylyltransferase region spans residues 344–477; the sequence is MTNGCFDLLH…IERMQSAPDT (134 aa).

This sequence in the N-terminal section; belongs to the carbohydrate kinase PfkB family. It in the C-terminal section; belongs to the cytidylyltransferase family. As to quaternary structure, homodimer.

It catalyses the reaction D-glycero-beta-D-manno-heptose 7-phosphate + ATP = D-glycero-beta-D-manno-heptose 1,7-bisphosphate + ADP + H(+). The enzyme catalyses D-glycero-beta-D-manno-heptose 1-phosphate + ATP + H(+) = ADP-D-glycero-beta-D-manno-heptose + diphosphate. The protein operates within nucleotide-sugar biosynthesis; ADP-L-glycero-beta-D-manno-heptose biosynthesis; ADP-L-glycero-beta-D-manno-heptose from D-glycero-beta-D-manno-heptose 7-phosphate: step 1/4. It participates in nucleotide-sugar biosynthesis; ADP-L-glycero-beta-D-manno-heptose biosynthesis; ADP-L-glycero-beta-D-manno-heptose from D-glycero-beta-D-manno-heptose 7-phosphate: step 3/4. In terms of biological role, catalyzes the phosphorylation of D-glycero-D-manno-heptose 7-phosphate at the C-1 position to selectively form D-glycero-beta-D-manno-heptose-1,7-bisphosphate. Functionally, catalyzes the ADP transfer from ATP to D-glycero-beta-D-manno-heptose 1-phosphate, yielding ADP-D-glycero-beta-D-manno-heptose. This Alkalilimnicola ehrlichii (strain ATCC BAA-1101 / DSM 17681 / MLHE-1) protein is Bifunctional protein HldE.